Here is a 480-residue protein sequence, read N- to C-terminus: Protein disulfide-isomerase 5-4 (480 aa).

N-linked (GlcNAc...) asparagine glycans are attached at residues asparagine 74 and asparagine 99. The Thioredoxin domain occupies phenylalanine 120–glutamate 263. Residues cysteine 170 and cysteine 173 each act as nucleophile in the active site. Residues cysteine 170 and cysteine 173 are joined by a disulfide bond. 3 N-linked (GlcNAc...) asparagine glycosylation sites follow: asparagine 280, asparagine 326, and asparagine 376. The chain crosses the membrane as a helical span at residues phenylalanine 439–isoleucine 459.

It belongs to the protein disulfide isomerase family. As to expression, widely expressed.

Its subcellular location is the membrane. Its function is as follows. Acts as a protein-folding catalyst that interacts with nascent polypeptides to catalyze the formation, isomerization, and reduction or oxidation of disulfide bonds. This Arabidopsis thaliana (Mouse-ear cress) protein is Protein disulfide-isomerase 5-4 (PDIL5-4).